Reading from the N-terminus, the 487-residue chain is Phosphoglucosamine mutase (487 aa).

Ser-134 functions as the Phosphoserine intermediate in the catalytic mechanism. Residues Ser-134, Asp-277, Asp-279, and Asp-281 each contribute to the Mg(2+) site. Phosphoserine is present on Ser-134.

It belongs to the phosphohexose mutase family. Requires Mg(2+) as cofactor. Post-translationally, activated by phosphorylation.

It carries out the reaction alpha-D-glucosamine 1-phosphate = D-glucosamine 6-phosphate. Functionally, catalyzes the conversion of glucosamine-6-phosphate to glucosamine-1-phosphate. The polypeptide is Phosphoglucosamine mutase (Gloeothece citriformis (strain PCC 7424) (Cyanothece sp. (strain PCC 7424))).